Consider the following 639-residue polypeptide: Poly(A)-specific ribonuclease PARN (639 aa).

Residues aspartate 28 and glutamate 30 each coordinate a divalent metal cation. 2 positions are modified to phosphoserine: serine 163 and serine 167. The R3H domain maps to 178–245; it reads KKFIDQVVEK…ERYIVISKVD (68 aa). Lysine 220 bears the N6-acetyllysine mark. A divalent metal cation contacts are provided by aspartate 292 and aspartate 382. Lysine 499 is subject to N6-acetyllysine. Serine 530 is subject to Phosphoserine. Residue serine 557 is modified to Phosphoserine; by MAPKAPK2. The segment at 560 to 639 is disordered; that stretch reads APSTVGKRNL…ATLFEVPDTW (80 aa). Serine 583 and serine 587 each carry phosphoserine. The segment covering 606 to 615 has biased composition (basic residues); the sequence is KKAKKLKRMK. Residues serine 619, serine 623, and serine 628 each carry the phosphoserine modification. Threonine 631 bears the Phosphothreonine mark.

This sequence belongs to the CAF1 family. Homodimer. Found in a mRNA decay complex with RENT1, RENT2 and RENT3B. Interacts with KHSRP. Interacts with CELF1/CUGBP1. Interacts with ZC3HAV1 in an RNA-independent manner. Interacts with DHX36. It depends on Mg(2+) as a cofactor. Phosphorylation by MAPKAPK2, preventing GADD45A mRNA degradation after genotoxic stress. Ubiquitous.

The protein localises to the nucleus. It is found in the cytoplasm. The protein resides in the nucleolus. The enzyme catalyses Exonucleolytic cleavage of poly(A) to 5'-AMP.. Functionally, 3'-exoribonuclease that has a preference for poly(A) tails of mRNAs, thereby efficiently degrading poly(A) tails. Exonucleolytic degradation of the poly(A) tail is often the first step in the decay of eukaryotic mRNAs and is also used to silence certain maternal mRNAs translationally during oocyte maturation and early embryonic development. Interacts with both the 3'-end poly(A) tail and the 5'-end cap structure during degradation, the interaction with the cap structure being required for an efficient degradation of poly(A) tails. Involved in nonsense-mediated mRNA decay, a critical process of selective degradation of mRNAs that contain premature stop codons. Also involved in degradation of inherently unstable mRNAs that contain AU-rich elements (AREs) in their 3'-UTR, possibly via its interaction with KHSRP. Probably mediates the removal of poly(A) tails of AREs mRNAs, which constitutes the first step of destabilization. Also able to recognize and trim poly(A) tails of microRNAs such as MIR21 and H/ACA box snoRNAs (small nucleolar RNAs) leading to microRNAs degradation or snoRNA increased stability. The protein is Poly(A)-specific ribonuclease PARN (PARN) of Homo sapiens (Human).